The following is a 455-amino-acid chain: Hydroxymethylglutaryl-CoA synthase 2 (455 aa).

Glu86 acts as the Proton donor/acceptor in catalysis. The Acyl-thioester intermediate role is filled by Cys120. Positions 120, 161, 211, 255, 264, 329, and 363 each coordinate (3S)-3-hydroxy-3-methylglutaryl-CoA. His255 (proton donor/acceptor) is an active-site residue.

The protein belongs to the thiolase-like superfamily. HMG-CoA synthase family.

The enzyme catalyses acetoacetyl-CoA + acetyl-CoA + H2O = (3S)-3-hydroxy-3-methylglutaryl-CoA + CoA + H(+). It functions in the pathway metabolic intermediate biosynthesis; (R)-mevalonate biosynthesis; (R)-mevalonate from acetyl-CoA: step 2/3. In terms of biological role, this enzyme condenses acetyl-CoA with acetoacetyl-CoA to form HMG-CoA, which is the substrate for HMG-CoA reductase. This chain is Hydroxymethylglutaryl-CoA synthase 2 (HMGCS-2), found in Blattella germanica (German cockroach).